A 60-amino-acid chain; its full sequence is Large ribosomal subunit protein bL32 (60 aa).

Disordered regions lie at residues 1–22 and 34–60; these read MAVQ…HNAL and GETH…KSEA. The span at 9–19 shows a compositional bias: basic residues; sequence SPSKRGMHRSH.

It belongs to the bacterial ribosomal protein bL32 family.

The chain is Large ribosomal subunit protein bL32 from Variovorax paradoxus (strain S110).